Consider the following 100-residue polypeptide: High mobility group protein C (100 aa).

A DNA-binding region (HMG box) is located at residues Pro-12–Glu-80. The disordered stretch occupies residues Lys-81 to Lys-100. A compositionally biased stretch (basic residues) spans Lys-90–Lys-100.

It is found in the nucleus. It localises to the chromosome. The protein is High mobility group protein C of Tetrahymena thermophila.